Reading from the N-terminus, the 263-residue chain is MLRFAVLGHPVAHSLSPAMHAFALESLGLEGSYEAWDTPLEALPGRLKEVRRAFRGVNLTLPLKEAALAHLDWVSPEAQRIGAVNTVLQVEGRLFGFNTDAPGFLEALKAGGIPLKGPALVLGAGGAGRAVAFALREAGLEVWVWNRTPQRALALAEEFGLRAVPLEKAREARLLVNATRVGLEDPSASPLPAELLPEEGAVVDLVYRPLWTRFLREAQERGLKVQTGLPMLAWQGALAFRLWTGLLPDPSGMEEAARRALGV.

Residues Ser-14–Ser-16 and Thr-60 each bind shikimate. The active-site Proton acceptor is Lys-64. Shikimate is bound by residues Asn-85 and Asp-100. NADP(+) is bound by residues Gly-123–Ala-127, Asn-146–Arg-151, and Leu-205. Tyr-207 is a shikimate binding site. Gly-228 lines the NADP(+) pocket.

Belongs to the shikimate dehydrogenase family. In terms of assembly, homodimer.

The catalysed reaction is shikimate + NADP(+) = 3-dehydroshikimate + NADPH + H(+). It functions in the pathway metabolic intermediate biosynthesis; chorismate biosynthesis; chorismate from D-erythrose 4-phosphate and phosphoenolpyruvate: step 4/7. Involved in the biosynthesis of the chorismate, which leads to the biosynthesis of aromatic amino acids. Catalyzes the reversible NADPH linked reduction of 3-dehydroshikimate (DHSA) to yield shikimate (SA). In Thermus thermophilus (strain ATCC BAA-163 / DSM 7039 / HB27), this protein is Shikimate dehydrogenase (NADP(+)).